A 96-amino-acid polypeptide reads, in one-letter code: Redox-responsive transcriptional regulator WhiB3 (96 aa).

Residues 22–86 form the 4Fe-4S Wbl-type domain; sequence LCRGVDSSMF…GGLSESEREL (65 aa). [4Fe-4S] cluster-binding residues include Cys23, Cys53, Cys56, and Cys62.

It belongs to the WhiB family. [4Fe-4S] cluster is required as a cofactor. The Fe-S cluster can be nitrosylated by nitric oxide (NO). In terms of processing, upon Fe-S cluster removal intramolecular disulfide bonds are formed.

The protein localises to the cytoplasm. A redox-sensitive transcriptional regulator. Maintains intracellular redox homeostasis by regulating catabolic metabolism and polyketide biosynthesis. Regulates expression of the redox buffer ergothioneine (ERG). In concert with myothiol (MSH), another redox buffer, responds to low pH leading to acid resistance. The apo- but not holo-form probably binds DNA. The polypeptide is Redox-responsive transcriptional regulator WhiB3 (whiB3) (Mycolicibacterium smegmatis (strain ATCC 700084 / mc(2)155) (Mycobacterium smegmatis)).